An 88-amino-acid polypeptide reads, in one-letter code: MSKGHSLQDPYLNVLRKERVPVSIYLVNGIKLQGQVESFDQFVVLLKNTVSQMVYKHAISTVVPSRAVRVPLLNEAGGAEGEEDEQAE.

Residues 9–68 (DPYLNVLRKERVPVSIYLVNGIKLQGQVESFDQFVVLLKNTVSQMVYKHAISTVVPSRAV) enclose the Sm domain.

This sequence belongs to the Hfq family. As to quaternary structure, homohexamer.

RNA chaperone that binds small regulatory RNA (sRNAs) and mRNAs to facilitate mRNA translational regulation in response to envelope stress, environmental stress and changes in metabolite concentrations. Also binds with high specificity to tRNAs. The polypeptide is RNA-binding protein Hfq (Cellvibrio japonicus (strain Ueda107) (Pseudomonas fluorescens subsp. cellulosa)).